Reading from the N-terminus, the 141-residue chain is Large ribosomal subunit protein uL11 (141 aa).

It belongs to the universal ribosomal protein uL11 family. As to quaternary structure, part of the ribosomal stalk of the 50S ribosomal subunit. Interacts with L10 and the large rRNA to form the base of the stalk. L10 forms an elongated spine to which L12 dimers bind in a sequential fashion forming a multimeric L10(L12)X complex. In terms of processing, one or more lysine residues are methylated.

Functionally, forms part of the ribosomal stalk which helps the ribosome interact with GTP-bound translation factors. The polypeptide is Large ribosomal subunit protein uL11 (Streptococcus pneumoniae (strain Hungary19A-6)).